We begin with the raw amino-acid sequence, 70 residues long: Conotoxin Im11.11 (70 aa).

An N-terminal signal peptide occupies residues 1-25 (MFRLTSVGCILLVIAFLNLVGLTNA). Intrachain disulfides connect Cys26-Cys40, Cys33-Cys45, Cys39-Cys49, and Cys44-Cys53. Pro56 bears the Proline amide mark. Residues 60–70 (TRLQGFFKHRR) constitute a propeptide that is removed on maturation.

It belongs to the conotoxin I2 superfamily. Expressed by the venom duct.

It localises to the secreted. In terms of biological role, probable neurotoxin. The sequence is that of Conotoxin Im11.11 from Conus imperialis (Imperial cone).